A 104-amino-acid chain; its full sequence is Large ribosomal subunit protein bL21 (104 aa).

It belongs to the bacterial ribosomal protein bL21 family. As to quaternary structure, part of the 50S ribosomal subunit. Contacts protein L20.

Functionally, this protein binds to 23S rRNA in the presence of protein L20. In Allorhizobium ampelinum (strain ATCC BAA-846 / DSM 112012 / S4) (Agrobacterium vitis (strain S4)), this protein is Large ribosomal subunit protein bL21.